A 477-amino-acid polypeptide reads, in one-letter code: Cysteine--tRNA ligase (477 aa).

Position 29 (C29) interacts with Zn(2+). Positions 31 to 41 match the 'HIGH' region motif; the sequence is PTVYDFAHIGN. 3 residues coordinate Zn(2+): C224, H249, and E253. Residues 282-286 carry the 'KMSKS' region motif; that stretch reads KMSKS. K285 provides a ligand contact to ATP.

The protein belongs to the class-I aminoacyl-tRNA synthetase family. As to quaternary structure, monomer. Requires Zn(2+) as cofactor.

The protein resides in the cytoplasm. It carries out the reaction tRNA(Cys) + L-cysteine + ATP = L-cysteinyl-tRNA(Cys) + AMP + diphosphate. In Nitrobacter winogradskyi (strain ATCC 25391 / DSM 10237 / CIP 104748 / NCIMB 11846 / Nb-255), this protein is Cysteine--tRNA ligase.